The sequence spans 391 residues: E3 ubiquitin-protein ligase RMND5A (391 aa).

The region spanning 114–146 (SQQILSEVMVEHFFRQGMLDVAEELCQEAGLSI) is the LisH domain. One can recognise a CTLH domain in the interval 153 to 210 (PFVELNRILEALKVRVLRPALEWAVSNREMLMAQNSSLEFKLHRLYFISLLMGGTVNQ). An RING-Gid-type zinc finger spans residues 336–377 (CPILRQQTTDNNPPMKLVCGHIISRDALNKMFNGSKLKCPYC).

In terms of assembly, identified in the CTLH complex that contains at least RANBP9, MKLN1, MAEA, RMND5A, GID8 and ARMC8.

It is found in the nucleus. It localises to the nucleoplasm. Its subcellular location is the cytoplasm. It catalyses the reaction S-ubiquitinyl-[E2 ubiquitin-conjugating enzyme]-L-cysteine + [acceptor protein]-L-lysine = [E2 ubiquitin-conjugating enzyme]-L-cysteine + N(6)-ubiquitinyl-[acceptor protein]-L-lysine.. E3 ubiquitin-protein ligase component of the CTLH complex. The protein is E3 ubiquitin-protein ligase RMND5A (rmnd5a) of Xenopus tropicalis (Western clawed frog).